The primary structure comprises 804 residues: Leucine--tRNA ligase (804 aa).

Residues 40–51 (PYPSGAGLHVGH) carry the 'HIGH' region motif. The 'KMSKS' region motif lies at 576–580 (KMSKS). An ATP-binding site is contributed by lysine 579.

This sequence belongs to the class-I aminoacyl-tRNA synthetase family.

It is found in the cytoplasm. The catalysed reaction is tRNA(Leu) + L-leucine + ATP = L-leucyl-tRNA(Leu) + AMP + diphosphate. The protein is Leucine--tRNA ligase of Bacillus pumilus (strain SAFR-032).